We begin with the raw amino-acid sequence, 351 residues long: Modulator of apoptosis 1 (351 aa).

Positions Y49 to L52 match the LIR motif. Positions L120–E127 are BH3-like. Residues K202–R205 form an RASSF1-binding region.

It belongs to the PNMA family. As to quaternary structure, homodimer. Under normal circumstances, held in an inactive conformation by an intramolecular interaction. Interacts with BAX. Binding to RASSF1 isoform A (RASSF1A) relieves this inhibitory interaction and allows further binding to BAX. Also binds to BCL2 and BCLX. Recruited to the TNFRSF1A and TNFRSF10A complexes in response to their respective cognate ligand, after internalization. Interacts with TRIM39. Interacts with RASSF6. Interacts with ATG8 proteins MAP1LC3A, MAP1LC3B and MAP1LC3C. Does not interact with ATG8 proteins GABARAPL1, GABARAPL2 and GABARAP. Interacts with SQSTM1; promoting dissociation of SQSTM1 inclusion bodies that sequester KEAP1. Ubiquitinated and degraded during mitotic exit by APC/C-Cdh1, this modification is inhibited by TRIM39. In terms of tissue distribution, widely expressed, with high levels in heart and brain.

The protein resides in the cytoplasm. The protein localises to the cytosol. Its subcellular location is the mitochondrion outer membrane. It is found in the extracellular vesicle membrane. Its function is as follows. Retrotransposon-derived protein that forms virion-like capsids. Acts as an effector of BAX during apoptosis: enriched at outer mitochondria membrane and associates with BAX upon induction of apoptosis, facilitating BAX-dependent mitochondrial outer membrane permeabilization and apoptosis. Required for death receptor-dependent apoptosis. When associated with RASSF1, promotes BAX conformational change and translocation to mitochondrial membranes in response to TNF and TNFSF10 stimulation. Also promotes autophagy: promotes phagophore closure via association with ATG8 proteins. Acts as an inhibitor of the NFE2L2/NRF2 pathway via interaction with SQSTM1: interaction promotes dissociation of SQSTM1 inclusion bodies that sequester KEAP1, relieving inactivation of the BCR(KEAP1) complex. The polypeptide is Modulator of apoptosis 1 (Homo sapiens (Human)).